The sequence spans 463 residues: ATP-dependent rRNA helicase SPB4 (463 aa).

Residues 4-32 (KGIEDVAMNGRLKKEIEENGFGKMTEVQL) carry the Q motif motif. The 171-residue stretch at 35 to 205 (IPEVLKGKDV…RVFLRNPVSI (171 aa)) folds into the Helicase ATP-binding domain. 48 to 55 (SPTGTGKT) serves as a coordination point for ATP. Residues 153–156 (DEAD) carry the DEAD box motif. Positions 226-382 (KLLVLMDIVT…DIKSMISPEL (157 aa)) constitute a Helicase C-terminal domain. The segment at 444-463 (RDGKKRALPKKKYRKKRAIK) is disordered. Positions 446-463 (GKKRALPKKKYRKKRAIK) are enriched in basic residues.

This sequence belongs to the DEAD box helicase family. DDX55/SPB4 subfamily. In terms of assembly, component of pre-60S ribosomal complexes.

It localises to the nucleus. The protein localises to the nucleolus. It catalyses the reaction ATP + H2O = ADP + phosphate + H(+). Functionally, ATP-binding RNA helicase involved in the biogenesis of 60S ribosomal subunits. Binds 90S pre-ribosomal particles and dissociates from pre-60S ribosomal particles after processing of 27SB pre-rRNA. Required for the normal formation of 18S rRNA through the processing of pre-rRNAs at sites A0, A1 and A2, and the normal formation of 25S and 5.8S rRNAs through the processing of pre-rRNAs at sites C1 and C2. This Encephalitozoon cuniculi (strain GB-M1) (Microsporidian parasite) protein is ATP-dependent rRNA helicase SPB4.